The sequence spans 457 residues: Siroheme synthase (457 aa).

The precorrin-2 dehydrogenase /sirohydrochlorin ferrochelatase stretch occupies residues 1-204 (MDHLPIFCQL…ADEKAVNATT (204 aa)). NAD(+)-binding positions include 22 to 23 (DV) and 43 to 44 (LT). Residue serine 128 is modified to Phosphoserine. The segment at 216–457 (GEVVLVGAGP…RDKLNWFSNY (242 aa)) is uroporphyrinogen-III C-methyltransferase. Proline 225 provides a ligand contact to S-adenosyl-L-methionine. Aspartate 248 functions as the Proton acceptor in the catalytic mechanism. Residue lysine 270 is the Proton donor of the active site. S-adenosyl-L-methionine contacts are provided by residues 301–303 (GGD), isoleucine 306, 331–332 (TA), methionine 382, and glycine 411.

In the N-terminal section; belongs to the precorrin-2 dehydrogenase / sirohydrochlorin ferrochelatase family. This sequence in the C-terminal section; belongs to the precorrin methyltransferase family.

It carries out the reaction uroporphyrinogen III + 2 S-adenosyl-L-methionine = precorrin-2 + 2 S-adenosyl-L-homocysteine + H(+). The catalysed reaction is precorrin-2 + NAD(+) = sirohydrochlorin + NADH + 2 H(+). It catalyses the reaction siroheme + 2 H(+) = sirohydrochlorin + Fe(2+). Its pathway is cofactor biosynthesis; adenosylcobalamin biosynthesis; precorrin-2 from uroporphyrinogen III: step 1/1. The protein operates within cofactor biosynthesis; adenosylcobalamin biosynthesis; sirohydrochlorin from precorrin-2: step 1/1. It participates in porphyrin-containing compound metabolism; siroheme biosynthesis; precorrin-2 from uroporphyrinogen III: step 1/1. It functions in the pathway porphyrin-containing compound metabolism; siroheme biosynthesis; siroheme from sirohydrochlorin: step 1/1. Its pathway is porphyrin-containing compound metabolism; siroheme biosynthesis; sirohydrochlorin from precorrin-2: step 1/1. Its function is as follows. Multifunctional enzyme that catalyzes the SAM-dependent methylations of uroporphyrinogen III at position C-2 and C-7 to form precorrin-2 via precorrin-1. Then it catalyzes the NAD-dependent ring dehydrogenation of precorrin-2 to yield sirohydrochlorin. Finally, it catalyzes the ferrochelation of sirohydrochlorin to yield siroheme. In Salmonella heidelberg (strain SL476), this protein is Siroheme synthase.